A 389-amino-acid polypeptide reads, in one-letter code: Type 2 DNA topoisomerase 6 subunit A (389 aa).

The Topo IIA-type catalytic domain maps to 12–162 (EARRKAANIL…MLILSKEKGK (151 aa)). Tyr-106 serves as the catalytic O-(5'-phospho-DNA)-tyrosine intermediate. Mg(2+) contacts are provided by Glu-209 and Asp-261.

It belongs to the TOP6A family. In terms of assembly, homodimer. Heterotetramer of two Top6A and two Top6B chains. The cofactor is Mg(2+).

The enzyme catalyses ATP-dependent breakage, passage and rejoining of double-stranded DNA.. Its activity is regulated as follows. Not inhibited by the DNA gyrase inhibitor novobiocin, instead inhibited by eukaryotic topoisomerase inhibitors such as m- and o-amsacrine, ellipticine, and the quinolone CP-115,953. Relaxes both positive and negative supercoils and exhibits a strong decatenase and unknotting activity; it cannot introduce DNA supercoils. ATP is absolutely required for DNA cleavage; the nonhydrolyzable analog AMP-PNP generates nicked or linear products from a supercoiled dsDNA substrate. Generates staggered two-nucleotide long 5' overhangs. The enzyme is covalently attached transiently to the 5'-ends of the cleaved strands. This is Type 2 DNA topoisomerase 6 subunit A from Saccharolobus shibatae (strain ATCC 51178 / DSM 5389 / JCM 8931 / NBRC 15437 / B12) (Sulfolobus shibatae).